The following is a 676-amino-acid chain: Lutropin-choriogonadotropic hormone receptor (676 aa).

A signal peptide spans Met1–Arg29. At Glu30 to Arg340 the chain is on the extracellular side. A glycan (N-linked (GlcNAc...) asparagine) is linked at Asn103. 5 LRR repeats span residues Leu126 to Ser151, Thr153 to Gly175, Met176 to Gly200, Thr201 to Gly224, and Ala225 to Ser248. 2 N-linked (GlcNAc...) asparagine glycosylation sites follow: Asn178 and Asn199. Tyr308 carries the sulfotyrosine modification. The helical transmembrane segment at Val341–Leu362 threads the bilayer. At Thr363–Arg372 the chain is on the cytoplasmic side. Residues Phe373 to Ala393 form a helical membrane-spanning segment. The Extracellular portion of the chain corresponds to Ser394–Cys416. A disulfide bridge connects residues Cys416 and Cys491. Residues Asn417–Leu439 form a helical membrane-spanning segment. The Cytoplasmic segment spans residues Glu440–His459. The chain crosses the membrane as a helical span at residues Ala460–Val482. Residues Ser483–Gln502 lie on the Extracellular side of the membrane. A helical membrane pass occupies residues Ile503–Ile526. Residues Tyr527–Lys547 lie on the Cytoplasmic side of the membrane. A helical membrane pass occupies residues Met548–Phe571. Over Lys572–Lys582 the chain is Extracellular. A helical transmembrane segment spans residues Val583–Thr604. The Cytoplasmic portion of the chain corresponds to Lys605–Tyr676. S-palmitoyl cysteine attachment occurs at residues Cys620 and Cys621.

It belongs to the G-protein coupled receptor 1 family. FSH/LSH/TSH subfamily. Post-translationally, sulfated.

It localises to the cell membrane. Receptor for lutropin-choriogonadotropic hormone. The activity of this receptor is mediated by G proteins which activate adenylate cyclase. The protein is Lutropin-choriogonadotropic hormone receptor (LHCGR) of Callithrix jacchus (White-tufted-ear marmoset).